The sequence spans 190 residues: Segregation and condensation protein B (190 aa).

Belongs to the ScpB family. As to quaternary structure, homodimer. Homodimerization may be required to stabilize the binding of ScpA to the Smc head domains. Component of a cohesin-like complex composed of ScpA, ScpB and the Smc homodimer, in which ScpA and ScpB bind to the head domain of Smc. The presence of the three proteins is required for the association of the complex with DNA.

It localises to the cytoplasm. Its function is as follows. Participates in chromosomal partition during cell division. May act via the formation of a condensin-like complex containing Smc and ScpA that pull DNA away from mid-cell into both cell halves. The protein is Segregation and condensation protein B of Bacillus thuringiensis subsp. konkukian (strain 97-27).